We begin with the raw amino-acid sequence, 504 residues long: MSSTLLEQTRSNHEEVERLERLVVEDLQKEPPSSKDRLVQGHRVRHMIESIMLTTEKLVETYEDKDGAWDDEIAALGGQTATGTNVFSEFYDRLKEIREYHKRHPSGRLVDANEDYEARLKEEPIIAFSGEEGNGRYLDLHDMYNQYINSKFGERVEYSAYLDVFSQPEKIPRKLKLSRQYMKYMEALLEYLVYFFQRTEPLQDLDRILSKVCSDFEEQYADGIVEGLDNELIPSQHTVIDLDYYSTVEELVDVGPEKLKEALGALGLKVGGTPQQRAERLFLTKHTPLEKLDKKHFARPPHNGKQNGDAKSTHESENAKEIALTEAKVKKLCNLLDETIERTKQNIVKKQSLTYEEMEGEREGEEANTELESDDEDGLIYNPLKLPIGWDGKPIPYWLYKLHGLGQEFKCEICGNYSYWGRRAFERHFKEWRHQHGMRCLGIPNTKNFNEITSIEEAKELWKRIQERQGVNKWRPELEEEYEDREGNIYNKKTYSDLQRQGLI.

Serine 2 is subject to N-acetylserine. 2 disordered regions span residues 293 to 319 and 355 to 374; these read DKKH…SENA and YEEM…LESD. Residues 356–374 are compositionally biased toward acidic residues; that stretch reads EEMEGEREGEEANTELESD. A Phosphoserine modification is found at serine 373. The Matrin-type zinc-finger motif lies at 409 to 440; it reads FKCEICGNYSYWGRRAFERHFKEWRHQHGMRC.

Belongs to the SF3A3 family. As to expression, expressed at moderate levels in all sporophytic tissues with strongest expression in gametophytes.

It is found in the nucleus. In terms of biological role, splicing factor homolog to SF3a60 that may be involved in pre-spliceosome formation. Is necessary for gametic cell fate determination. The polypeptide is Splicing factor SF3a60 homolog (Arabidopsis thaliana (Mouse-ear cress)).